Here is a 222-residue protein sequence, read N- to C-terminus: Capsular polysaccharide type 8 biosynthesis protein cap8A (222 aa).

Helical transmembrane passes span 20-40 and 172-192; these read ILII…FFVL and VVNL…YIFF.

This sequence belongs to the CpsC/CapA family.

It is found in the cell membrane. Functionally, required for the biosynthesis of type 8 capsular polysaccharide (Cap8/CP8). Might act as the chain-length regulator. The protein is Capsular polysaccharide type 8 biosynthesis protein cap8A (cap8A) of Staphylococcus aureus.